We begin with the raw amino-acid sequence, 173 residues long: 6,7-dimethyl-8-ribityllumazine synthase (173 aa).

Residues tyrosine 34, 65–67, and 94–96 contribute to the 5-amino-6-(D-ribitylamino)uracil site; these read ALE and CVI. 99 to 100 is a (2S)-2-hydroxy-3-oxobutyl phosphate binding site; the sequence is ET. Histidine 102 acts as the Proton donor in catalysis. Asparagine 127 contributes to the 5-amino-6-(D-ribitylamino)uracil binding site. (2S)-2-hydroxy-3-oxobutyl phosphate is bound at residue arginine 141.

Belongs to the DMRL synthase family.

It carries out the reaction (2S)-2-hydroxy-3-oxobutyl phosphate + 5-amino-6-(D-ribitylamino)uracil = 6,7-dimethyl-8-(1-D-ribityl)lumazine + phosphate + 2 H2O + H(+). It functions in the pathway cofactor biosynthesis; riboflavin biosynthesis; riboflavin from 2-hydroxy-3-oxobutyl phosphate and 5-amino-6-(D-ribitylamino)uracil: step 1/2. In terms of biological role, catalyzes the formation of 6,7-dimethyl-8-ribityllumazine by condensation of 5-amino-6-(D-ribitylamino)uracil with 3,4-dihydroxy-2-butanone 4-phosphate. This is the penultimate step in the biosynthesis of riboflavin. The protein is 6,7-dimethyl-8-ribityllumazine synthase of Methylorubrum extorquens (strain CM4 / NCIMB 13688) (Methylobacterium extorquens).